The sequence spans 427 residues: MTTTTTAPALPTPIHDGLGNGTTYERSIPRPVNPFSNRVPGREIITVPNFTLESGVEMRNVPVAYMSWGKLSPKANNVMIICHALSGSADVSDWWGPLLGPGKAFDTDKFFVICMNSLGSPYGTASPVTAKNGDYSEGWYGADFPATTIRDDVRLHKLVLDRLGVRKVAAVIGGSMGGMHVLEWAFFGKDYVRCIVPAATSSHQSAWAIGWGEAQRHAIRSDVKYKNGRYGFDDPPILGLEAARMTALLTYRSRDSLERRFGRDTGNKKKAKNKGSETLPSNSTPIHSQGGADETPVAFDRADSNFAAQSYLRYQAKKFSDRFDSNCYIALTNKLDTHDLARGRTRTITEALSLIEQPTLVLGIRSDGLYTLAEQEQIARTVPNAKLREIVSDDGHDAFLIEWSQLNWLLVGFLHESLPDIMQRAAL.

Over residues 1-13 the composition is skewed to low complexity; it reads MTTTTTAPALPTP. A disordered region spans residues 1 to 35; that stretch reads MTTTTTAPALPTPIHDGLGNGTTYERSIPRPVNPF. The 324-residue stretch at 77–400 folds into the AB hydrolase-1 domain; the sequence is NVMIICHALS…VSDDGHDAFL (324 aa). The Nucleophile role is filled by S175. The disordered stretch occupies residues 260-297; that stretch reads RFGRDTGNKKKAKNKGSETLPSNSTPIHSQGGADETPV. Residues 276-287 are compositionally biased toward polar residues; the sequence is SETLPSNSTPIH. Catalysis depends on residues D367 and H396.

Belongs to the AB hydrolase superfamily. MetX family.

The enzyme catalyses L-homoserine + acetyl-CoA = O-acetyl-L-homoserine + CoA. Its pathway is mycotoxin biosynthesis. Homoserine O-acetyltransferase; part of the gene cluster that mediates the biosynthesis of fusaric acid, a mycotoxin with low to moderate toxicity to animals and humans, but with high phytotoxic properties. L-aspartate is suggested as fusaric acid amino acid precursor that is activated and further processed to O-acetyl-L-homoserine by cluster enzymes aspartate kinase FUB3 and homoserine O-acetyltransferase FUB5, as well as enzymes of the primary metabolism. The polyketide synthase (PKS) FUB1 generates the triketide trans-2-hexenal which is presumptively released by the hydrolase FUB4 and linked to the NRPS-bound amino acid precursor by NAD(P)-dependent dehydrogenase FUB6. FUB1, FUB4, and the non-canonical NRPS Fub8 may form an enzyme complex. Further processing of the NRPS-bound intermediate might be carried out by FUB6 and the sulfhydrylase FUB7, enabling a spontaneous electrocyclization to close the carbon backbone of fusaric acid. Dihydrofusaric acid is likely to be released via reduction by the thioester reductase (TR) domain of FUB8 whereupon the final oxidation to fusaric acid may (also) be performed by the FMN-dependent dehydrogenase FUB9. The sequence is that of Homoserine O-acetyltransferase FUB5 from Gibberella fujikuroi (strain CBS 195.34 / IMI 58289 / NRRL A-6831) (Bakanae and foot rot disease fungus).